A 327-amino-acid polypeptide reads, in one-letter code: Undecaprenyl-phosphate 4-deoxy-4-formamido-L-arabinose transferase (327 aa).

The Cytoplasmic portion of the chain corresponds to M1–L235. The chain crosses the membrane as a helical span at residues L236–V256. Over L257–G269 the chain is Periplasmic. Residues V270 to L290 traverse the membrane as a helical segment. Residues L291–Q327 are Cytoplasmic-facing.

The protein belongs to the glycosyltransferase 2 family.

The protein resides in the cell inner membrane. It carries out the reaction UDP-4-deoxy-4-formamido-beta-L-arabinose + di-trans,octa-cis-undecaprenyl phosphate = 4-deoxy-4-formamido-alpha-L-arabinopyranosyl di-trans,octa-cis-undecaprenyl phosphate + UDP. The protein operates within glycolipid biosynthesis; 4-amino-4-deoxy-alpha-L-arabinose undecaprenyl phosphate biosynthesis; 4-amino-4-deoxy-alpha-L-arabinose undecaprenyl phosphate from UDP-4-deoxy-4-formamido-beta-L-arabinose and undecaprenyl phosphate: step 1/2. Its pathway is bacterial outer membrane biogenesis; lipopolysaccharide biosynthesis. Its function is as follows. Catalyzes the transfer of 4-deoxy-4-formamido-L-arabinose from UDP to undecaprenyl phosphate. The modified arabinose is attached to lipid A and is required for resistance to polymyxin and cationic antimicrobial peptides. This chain is Undecaprenyl-phosphate 4-deoxy-4-formamido-L-arabinose transferase, found in Salmonella paratyphi A (strain ATCC 9150 / SARB42).